A 233-amino-acid chain; its full sequence is DnaA regulatory inactivator Hda (233 aa).

The protein belongs to the DnaA family. HdA subfamily. The active form seems to be an ADP-bound monomer. Forms the RIDA complex (regulatory inactivation of DnaA) of ATP-DnaA, ADP-Hda and the DNA-loaded beta sliding clamp (dnaN).

Functionally, mediates the interaction of DNA replication initiator protein DnaA with DNA polymerase subunit beta sliding clamp (dnaN). Stimulates hydrolysis of ATP-DnaA to ADP-DnaA, rendering DnaA inactive for reinitiation, a process called regulatory inhibition of DnaA or RIDA. This Escherichia fergusonii (strain ATCC 35469 / DSM 13698 / CCUG 18766 / IAM 14443 / JCM 21226 / LMG 7866 / NBRC 102419 / NCTC 12128 / CDC 0568-73) protein is DnaA regulatory inactivator Hda.